A 599-amino-acid chain; its full sequence is Elongation factor 4 (599 aa).

Residues 2 to 184 (KNIRNFSIIA…RLVRDIPPPQ (183 aa)) enclose the tr-type G domain. Residues 14 to 19 (DHGKST) and 131 to 134 (NKID) contribute to the GTP site.

Belongs to the TRAFAC class translation factor GTPase superfamily. Classic translation factor GTPase family. LepA subfamily.

The protein localises to the cell inner membrane. It carries out the reaction GTP + H2O = GDP + phosphate + H(+). Its function is as follows. Required for accurate and efficient protein synthesis under certain stress conditions. May act as a fidelity factor of the translation reaction, by catalyzing a one-codon backward translocation of tRNAs on improperly translocated ribosomes. Back-translocation proceeds from a post-translocation (POST) complex to a pre-translocation (PRE) complex, thus giving elongation factor G a second chance to translocate the tRNAs correctly. Binds to ribosomes in a GTP-dependent manner. The polypeptide is Elongation factor 4 (Salmonella gallinarum (strain 287/91 / NCTC 13346)).